Consider the following 223-residue polypeptide: Deoxyribose-phosphate aldolase (223 aa).

The active-site Proton donor/acceptor is D91. K153 serves as the catalytic Schiff-base intermediate with acetaldehyde. The Proton donor/acceptor role is filled by K182.

It belongs to the DeoC/FbaB aldolase family. DeoC type 1 subfamily.

It localises to the cytoplasm. The enzyme catalyses 2-deoxy-D-ribose 5-phosphate = D-glyceraldehyde 3-phosphate + acetaldehyde. Its pathway is carbohydrate degradation; 2-deoxy-D-ribose 1-phosphate degradation; D-glyceraldehyde 3-phosphate and acetaldehyde from 2-deoxy-alpha-D-ribose 1-phosphate: step 2/2. In terms of biological role, catalyzes a reversible aldol reaction between acetaldehyde and D-glyceraldehyde 3-phosphate to generate 2-deoxy-D-ribose 5-phosphate. This Yersinia pseudotuberculosis serotype O:1b (strain IP 31758) protein is Deoxyribose-phosphate aldolase.